Consider the following 306-residue polypeptide: D-alanine--D-alanine ligase (306 aa).

Residues 107-300 enclose the ATP-grasp domain; sequence KEAYRAAGLP…FGQLCAWMVE (194 aa). 134–184 lines the ATP pocket; sequence MQPPYVVKPYNEGSSVGVYIVTEAANGPPVLAPDLPATLMVEEYVPGRELS. Mg(2+) is bound by residues aspartate 251, glutamate 267, and asparagine 269.

Belongs to the D-alanine--D-alanine ligase family. Mg(2+) is required as a cofactor. The cofactor is Mn(2+).

It is found in the cytoplasm. It carries out the reaction 2 D-alanine + ATP = D-alanyl-D-alanine + ADP + phosphate + H(+). It participates in cell wall biogenesis; peptidoglycan biosynthesis. Functionally, cell wall formation. This chain is D-alanine--D-alanine ligase, found in Ruegeria pomeroyi (strain ATCC 700808 / DSM 15171 / DSS-3) (Silicibacter pomeroyi).